The primary structure comprises 692 residues: Serine/threonine-protein kinase Nek8 (692 aa).

The region spanning 4–258 (YERIRVVGRG…LSHIMAQPLC (255 aa)) is the Protein kinase domain. Residues 10 to 18 (VGRGAFGIV) and Lys33 each bind ATP. Asp128 acts as the Proton acceptor in catalysis. Position 162 is a phosphothreonine; by autocatalysis (Thr162). The segment at 277–301 (AEKSVAPSNTGSRTTSVRCRGIPRG) is disordered. The span at 282–293 (APSNTGSRTTSV) shows a compositional bias: polar residues. RCC1 repeat units follow at residues 312–350 (SSVY…VTRS), 410–461 (GIIM…LSTE), 462–513 (RELF…LTVP), 580–631 (GDCY…IGAE), and 632–684 (SEVY…AVRS).

It belongs to the protein kinase superfamily. NEK Ser/Thr protein kinase family. NIMA subfamily. Interacts with PKD2; may regulate PKD2 targeting to the cilium. Interacts with ANKS6. Component of a complex containing at least ANKS6, INVS, NEK8 and NPHP3. ANKS6 may organize complex assembly by linking INVS and NPHP3 to NEK8 and INVS may target the complex to the proximal ciliary axoneme. Interacts with ANKS3. Mg(2+) is required as a cofactor. Highest expression in thyroid, adrenal gland and skin. Low levels in spleen, colon and uterus. Overexpressed in breast tumors, with highest expression in infiltrating ductal carcinomas and moderate levels in mucinous adenocarcinoma.

It localises to the cytoplasm. It is found in the cytoskeleton. The protein localises to the cell projection. Its subcellular location is the cilium. The protein resides in the microtubule organizing center. It localises to the centrosome. It is found in the cilium axoneme. It carries out the reaction L-seryl-[protein] + ATP = O-phospho-L-seryl-[protein] + ADP + H(+). The enzyme catalyses L-threonyl-[protein] + ATP = O-phospho-L-threonyl-[protein] + ADP + H(+). In terms of biological role, required for renal tubular integrity. May regulate local cytoskeletal structure in kidney tubule epithelial cells. May regulate ciliary biogenesis through targeting of proteins to the cilia. Plays a role in organogenesis, and is involved in the regulation of the Hippo signaling pathway. The chain is Serine/threonine-protein kinase Nek8 (NEK8) from Homo sapiens (Human).